The sequence spans 355 residues: uncharacterized protein (355 aa).

The protein localises to the cytoplasm. This is an uncharacterized protein from Saccharomyces cerevisiae (strain ATCC 204508 / S288c) (Baker's yeast).